The chain runs to 69 residues: Cell division protein CrgA (69 aa).

The next 2 membrane-spanning stretches (helical) occupy residues 14–34 (VWFP…MVLF) and 45–65 (AVGT…FAMM).

It belongs to the CrgA family.

The protein localises to the cell membrane. In terms of biological role, involved in cell division. This is Cell division protein CrgA from Tropheryma whipplei (strain TW08/27) (Whipple's bacillus).